The sequence spans 235 residues: Rab-like protein 3 (235 aa).

Residues 1–235 (MASLDRVKVL…GGNFKSLHYD (235 aa)) form a small GTPase-like region. Residues 16–21 (GVGKSS), 148–150 (KLD), and 179–180 (DC) each bind GTP.

It belongs to the small GTPase superfamily. Rab family. In terms of assembly, homodimer.

Functionally, required for KRAS signaling regulation and modulation of cell proliferation. Regulator of KRAS prenylation, and probably prenylation of other small GTPases. Required for lymphocyte development and function. Not required for myeloid cell development. This chain is Rab-like protein 3 (rabl3), found in Xenopus laevis (African clawed frog).